Here is a 216-residue protein sequence, read N- to C-terminus: Probable nicotinate-nucleotide adenylyltransferase (216 aa).

It belongs to the NadD family.

It catalyses the reaction nicotinate beta-D-ribonucleotide + ATP + H(+) = deamido-NAD(+) + diphosphate. Its pathway is cofactor biosynthesis; NAD(+) biosynthesis; deamido-NAD(+) from nicotinate D-ribonucleotide: step 1/1. Its function is as follows. Catalyzes the reversible adenylation of nicotinate mononucleotide (NaMN) to nicotinic acid adenine dinucleotide (NaAD). The polypeptide is Probable nicotinate-nucleotide adenylyltransferase (Pelobacter propionicus (strain DSM 2379 / NBRC 103807 / OttBd1)).